A 116-amino-acid polypeptide reads, in one-letter code: NAD(P)H-quinone oxidoreductase subunit M (116 aa).

It belongs to the complex I NdhM subunit family. As to quaternary structure, NDH-1 can be composed of about 15 different subunits; different subcomplexes with different compositions have been identified which probably have different functions.

It localises to the cellular thylakoid membrane. The catalysed reaction is a plastoquinone + NADH + (n+1) H(+)(in) = a plastoquinol + NAD(+) + n H(+)(out). It catalyses the reaction a plastoquinone + NADPH + (n+1) H(+)(in) = a plastoquinol + NADP(+) + n H(+)(out). Functionally, NDH-1 shuttles electrons from an unknown electron donor, via FMN and iron-sulfur (Fe-S) centers, to quinones in the respiratory and/or the photosynthetic chain. The immediate electron acceptor for the enzyme in this species is believed to be plastoquinone. Couples the redox reaction to proton translocation, and thus conserves the redox energy in a proton gradient. Cyanobacterial NDH-1 also plays a role in inorganic carbon-concentration. The chain is NAD(P)H-quinone oxidoreductase subunit M from Synechococcus sp. (strain RCC307).